A 526-amino-acid polypeptide reads, in one-letter code: MQNMFPWLTVIILLPLVAALAVPLIPEKQVKWYSFAVCLVDFVLMVAAFFTSYDLSNPDIQLAERYRWMPQIGLEWSVGADGLSMPLILLTGFITALATLAAWPVTLRPRMFHFLMLAMLAGMVGVFAVQDMVLFFLFFELELVPVYLMLAIWGGKGRLYAATKFILYTAVGSLFILVVGLAMYFYGDLRTFNMVELAAKNYDPTFQNLCFLGLLIAYAVKLPIFPLHTWLPDAHGEATAPVHMLLAGILLKMGGYALIRMNVGFFPEATQLFAPLLIVLGIVNIIYAALTSFGQRNLKRKIAYSSISHMGFVLIGVGSLSEIGMGGAMLQMISHGLIGASLFFLVGATYDRTHTLILSEMGGIAPKMPKIFAMFTACSMASLALPGMSGFVAELMVFVGMATTDAYSFQFKALVVLFAAFGVILTPIYLLSMLREIFYGTLNHAVVHEEDLVDAEPREVFIIASLLVPIFGIGLYPKLTTDLYAPTTDQLTRVTRERIARAAPPPALLSGVYSVEFADRDRVSLR.

A run of 13 helical transmembrane segments spans residues 5-25, 32-52, 87-107, 111-131, 133-153, 165-185, 211-231, 239-259, 273-293, 302-320, 331-351, 371-393, and 414-434; these read FPWL…VPLI, WYSF…FFTS, LILL…PVTL, MFHF…AVQD, VLFF…LAIW, FILY…AMYF, FLGL…HTWL, TAPV…YALI, FAPL…LTSF, IAYS…VGSL, QMIS…ATYD, IFAM…GFVA, and LVVL…LSML.

Belongs to the complex I subunit 4 family.

It is found in the cell inner membrane. The enzyme catalyses a plastoquinone + NADH + (n+1) H(+)(in) = a plastoquinol + NAD(+) + n H(+)(out). The catalysed reaction is a plastoquinone + NADPH + (n+1) H(+)(in) = a plastoquinol + NADP(+) + n H(+)(out). NDH-1 shuttles electrons from NAD(P)H, via FMN and iron-sulfur (Fe-S) centers, to quinones in the respiratory chain. The immediate electron acceptor for the enzyme in this species is believed to be plastoquinone. Couples the redox reaction to proton translocation (for every two electrons transferred, four hydrogen ions are translocated across the cytoplasmic membrane), and thus conserves the redox energy in a proton gradient. The polypeptide is NAD(P)H-quinone oxidoreductase chain 4 (Gloeobacter violaceus (strain ATCC 29082 / PCC 7421)).